A 411-amino-acid polypeptide reads, in one-letter code: Serine hydroxymethyltransferase (411 aa).

(6S)-5,6,7,8-tetrahydrofolate contacts are provided by residues leucine 117 and 121–123 (GHL). Lysine 226 carries the post-translational modification N6-(pyridoxal phosphate)lysine. Residues glutamate 241 and 349–351 (SPF) contribute to the (6S)-5,6,7,8-tetrahydrofolate site.

It belongs to the SHMT family. In terms of assembly, homodimer. Pyridoxal 5'-phosphate serves as cofactor.

Its subcellular location is the cytoplasm. It catalyses the reaction (6R)-5,10-methylene-5,6,7,8-tetrahydrofolate + glycine + H2O = (6S)-5,6,7,8-tetrahydrofolate + L-serine. The protein operates within one-carbon metabolism; tetrahydrofolate interconversion. Its pathway is amino-acid biosynthesis; glycine biosynthesis; glycine from L-serine: step 1/1. Its function is as follows. Catalyzes the reversible interconversion of serine and glycine with tetrahydrofolate (THF) serving as the one-carbon carrier. This reaction serves as the major source of one-carbon groups required for the biosynthesis of purines, thymidylate, methionine, and other important biomolecules. Also exhibits THF-independent aldolase activity toward beta-hydroxyamino acids, producing glycine and aldehydes, via a retro-aldol mechanism. The protein is Serine hydroxymethyltransferase of Oceanobacillus iheyensis (strain DSM 14371 / CIP 107618 / JCM 11309 / KCTC 3954 / HTE831).